We begin with the raw amino-acid sequence, 140 residues long: ATP synthase epsilon chain 1 (140 aa).

The protein belongs to the ATPase epsilon chain family. As to quaternary structure, F-type ATPases have 2 components, CF(1) - the catalytic core - and CF(0) - the membrane proton channel. CF(1) has five subunits: alpha(3), beta(3), gamma(1), delta(1), epsilon(1). CF(0) has three main subunits: a, b and c.

It localises to the cell inner membrane. Its function is as follows. Produces ATP from ADP in the presence of a proton gradient across the membrane. This Methylococcus capsulatus (strain ATCC 33009 / NCIMB 11132 / Bath) protein is ATP synthase epsilon chain 1.